Consider the following 211-residue polypeptide: Pyridoxine/pyridoxamine 5'-phosphate oxidase (211 aa).

Residues 7 to 10 and lysine 65 contribute to the substrate site; that span reads RREY. Residues 60 to 65, 75 to 76, arginine 81, lysine 82, and glutamine 104 contribute to the FMN site; these read RIVLLK and YT. The substrate site is built by tyrosine 122, arginine 126, and serine 130. Residues 139–140 and tryptophan 184 contribute to the FMN site; that span reads QS. Position 190–192 (190–192) interacts with substrate; the sequence is RLH. FMN is bound at residue arginine 194.

It belongs to the pyridoxamine 5'-phosphate oxidase family. Homodimer. FMN serves as cofactor.

The catalysed reaction is pyridoxamine 5'-phosphate + O2 + H2O = pyridoxal 5'-phosphate + H2O2 + NH4(+). It carries out the reaction pyridoxine 5'-phosphate + O2 = pyridoxal 5'-phosphate + H2O2. The protein operates within cofactor metabolism; pyridoxal 5'-phosphate salvage; pyridoxal 5'-phosphate from pyridoxamine 5'-phosphate: step 1/1. It functions in the pathway cofactor metabolism; pyridoxal 5'-phosphate salvage; pyridoxal 5'-phosphate from pyridoxine 5'-phosphate: step 1/1. In terms of biological role, catalyzes the oxidation of either pyridoxine 5'-phosphate (PNP) or pyridoxamine 5'-phosphate (PMP) into pyridoxal 5'-phosphate (PLP). This is Pyridoxine/pyridoxamine 5'-phosphate oxidase from Vibrio cholerae serotype O1 (strain ATCC 39541 / Classical Ogawa 395 / O395).